Reading from the N-terminus, the 96-residue chain is Large ribosomal subunit protein bL21 (96 aa).

It belongs to the bacterial ribosomal protein bL21 family. In terms of assembly, part of the 50S ribosomal subunit. Contacts protein L20.

Its function is as follows. This protein binds to 23S rRNA in the presence of protein L20. This is Large ribosomal subunit protein bL21 from Hydrogenobaculum sp. (strain Y04AAS1).